The primary structure comprises 502 residues: ATP synthase subunit alpha (502 aa).

169 to 176 (GDRQTGKT) contributes to the ATP binding site.

It belongs to the ATPase alpha/beta chains family. F-type ATPases have 2 components, CF(1) - the catalytic core - and CF(0) - the membrane proton channel. CF(1) has five subunits: alpha(3), beta(3), gamma(1), delta(1), epsilon(1). CF(0) has three main subunits: a(1), b(2) and c(9-12). The alpha and beta chains form an alternating ring which encloses part of the gamma chain. CF(1) is attached to CF(0) by a central stalk formed by the gamma and epsilon chains, while a peripheral stalk is formed by the delta and b chains.

The protein localises to the cell membrane. The catalysed reaction is ATP + H2O + 4 H(+)(in) = ADP + phosphate + 5 H(+)(out). Functionally, produces ATP from ADP in the presence of a proton gradient across the membrane. The alpha chain is a regulatory subunit. This chain is ATP synthase subunit alpha, found in Desulfitobacterium hafniense (strain Y51).